Reading from the N-terminus, the 359-residue chain is 3-dehydroquinate synthase (359 aa).

Residues 69-74 (DGEAHK), 103-107 (GVIGD), 127-128 (TT), Lys-140, Lys-149, and 167-170 (TLDT) each bind NAD(+). Zn(2+) is bound by residues Glu-182, His-245, and His-262.

The protein belongs to the sugar phosphate cyclases superfamily. Dehydroquinate synthase family. Requires Co(2+) as cofactor. It depends on Zn(2+) as a cofactor. NAD(+) is required as a cofactor.

It localises to the cytoplasm. The enzyme catalyses 7-phospho-2-dehydro-3-deoxy-D-arabino-heptonate = 3-dehydroquinate + phosphate. The protein operates within metabolic intermediate biosynthesis; chorismate biosynthesis; chorismate from D-erythrose 4-phosphate and phosphoenolpyruvate: step 2/7. In terms of biological role, catalyzes the conversion of 3-deoxy-D-arabino-heptulosonate 7-phosphate (DAHP) to dehydroquinate (DHQ). This chain is 3-dehydroquinate synthase, found in Methylococcus capsulatus (strain ATCC 33009 / NCIMB 11132 / Bath).